The following is a 122-amino-acid chain: Large ribosomal subunit protein bL12 (122 aa).

It belongs to the bacterial ribosomal protein bL12 family. Homodimer. Part of the ribosomal stalk of the 50S ribosomal subunit. Forms a multimeric L10(L12)X complex, where L10 forms an elongated spine to which 2 to 4 L12 dimers bind in a sequential fashion. Binds GTP-bound translation factors.

Functionally, forms part of the ribosomal stalk which helps the ribosome interact with GTP-bound translation factors. Is thus essential for accurate translation. The protein is Large ribosomal subunit protein bL12 of Streptococcus pneumoniae serotype 19F (strain G54).